We begin with the raw amino-acid sequence, 506 residues long: Histidine ammonia-lyase (506 aa).

The 5-imidazolinone (Ala-Gly) cross-link spans 143–145 (ASG). S144 is modified (2,3-didehydroalanine (Ser)).

This sequence belongs to the PAL/histidase family. In terms of processing, contains an active site 4-methylidene-imidazol-5-one (MIO), which is formed autocatalytically by cyclization and dehydration of residues Ala-Ser-Gly.

The protein resides in the cytoplasm. It carries out the reaction L-histidine = trans-urocanate + NH4(+). Its pathway is amino-acid degradation; L-histidine degradation into L-glutamate; N-formimidoyl-L-glutamate from L-histidine: step 1/3. In Salmonella typhimurium (strain LT2 / SGSC1412 / ATCC 700720), this protein is Histidine ammonia-lyase.